The sequence spans 308 residues: Cell division protein FtsQ (308 aa).

The interval Met-1–Ala-28 is disordered. The Cytoplasmic portion of the chain corresponds to Met-1–Arg-46. Residues Pro-18 to Ala-28 are compositionally biased toward basic and acidic residues. A helical membrane pass occupies residues Thr-47–Ala-67. The Periplasmic segment spans residues Ser-68 to Leu-308. The region spanning Phe-92–Arg-160 is the POTRA domain.

Belongs to the FtsQ/DivIB family. FtsQ subfamily.

The protein localises to the cell inner membrane. Its function is as follows. Essential cell division protein. This Cereibacter sphaeroides (strain ATCC 17023 / DSM 158 / JCM 6121 / CCUG 31486 / LMG 2827 / NBRC 12203 / NCIMB 8253 / ATH 2.4.1.) (Rhodobacter sphaeroides) protein is Cell division protein FtsQ.